Consider the following 319-residue polypeptide: Ubiquinone biosynthesis protein COQ4, mitochondrial (319 aa).

The N-terminal 28 residues, 1 to 28, are a transit peptide targeting the mitochondrion; sequence MISRSIFSKSVSLQRSQNRSFLLTAASA. Zn(2+) is bound by residues H205, D206, H209, and E221.

Belongs to the COQ4 family. Component of a multi-subunit COQ enzyme complex, composed of at least COQ3, COQ4, COQ5, COQ6, COQ7 and COQ9. Requires Zn(2+) as cofactor.

Its subcellular location is the mitochondrion inner membrane. The enzyme catalyses a 4-hydroxy-3-methoxy-5-(all-trans-polyprenyl)benzoate + H(+) = a 2-methoxy-6-(all-trans-polyprenyl)phenol + CO2. It participates in cofactor biosynthesis; ubiquinone biosynthesis. In terms of biological role, lyase that catalyzes the C1-decarboxylation of 4-hydroxy-3-methoxy-5-(all-trans-polyprenyl)benzoic acid into 2-methoxy-6-(all-trans-polyprenyl)phenol during ubiquinone biosynthesis. The polypeptide is Ubiquinone biosynthesis protein COQ4, mitochondrial (Clavispora lusitaniae (strain ATCC 42720) (Yeast)).